The sequence spans 266 residues: Cytochrome c oxidase assembly factor 7 homolog (266 aa).

Sel1-like repeat units lie at residues 32-64 and 66-104; these read PEAC…DDYG and AKSC…NLND. Over residues 166 to 179 the composition is skewed to low complexity; that stretch reads AVTASSGSGTSSPP. A disordered region spans residues 166–187; it reads AVTASSGSGTSSPPAGQPPLKD. The stretch at 212-247 is one Sel1-like 3 repeat; that stretch reads MYACANLSQMYARGDGIEKNEKEAEKYKKLALEMQD.

Belongs to the hcp beta-lactamase family.

Its function is as follows. Required for locomotion. Probably involved in the regulation of formation/maintenance of motor neurons at presynaptic terminals at the neuromuscular junction. In Drosophila melanogaster (Fruit fly), this protein is Cytochrome c oxidase assembly factor 7 homolog.